We begin with the raw amino-acid sequence, 152 residues long: UPF0178 protein SAB0630c (152 aa).

The protein belongs to the UPF0178 family.

The chain is UPF0178 protein SAB0630c from Staphylococcus aureus (strain bovine RF122 / ET3-1).